A 436-amino-acid chain; its full sequence is GTPase Der (436 aa).

EngA-type G domains follow at residues 4–167 and 175–351; these read PTVA…PTEA and IKFS…QSQN. Residues 10–17, 57–61, 119–122, 181–188, 229–233, and 294–297 contribute to the GTP site; these read GRPNVGKS, DTGGI, NKVD, DTAGM, and NKWD. The region spanning 352–436 is the KH-like domain; the sequence is TRIPSAVLND…PIRLIARKRK (85 aa).

The protein belongs to the TRAFAC class TrmE-Era-EngA-EngB-Septin-like GTPase superfamily. EngA (Der) GTPase family. As to quaternary structure, associates with the 50S ribosomal subunit.

Functionally, GTPase that plays an essential role in the late steps of ribosome biogenesis. This Streptococcus mutans serotype c (strain ATCC 700610 / UA159) protein is GTPase Der.